The sequence spans 182 residues: Putative pre-16S rRNA nuclease (182 aa).

The protein belongs to the YqgF nuclease family.

The protein resides in the cytoplasm. In terms of biological role, could be a nuclease involved in processing of the 5'-end of pre-16S rRNA. The polypeptide is Putative pre-16S rRNA nuclease (Corynebacterium aurimucosum (strain ATCC 700975 / DSM 44827 / CIP 107346 / CN-1) (Corynebacterium nigricans)).